The primary structure comprises 89 residues: Ragulator complex protein LAMTOR5 homolog (89 aa).

Belongs to the LAMTOR5 family. In terms of assembly, part of the Ragulator complex.

It localises to the cytoplasm. The protein localises to the lysosome. Regulator of the TOR pathway, a signaling cascade that promotes cell growth in response to growth factors, energy levels, and amino acids. As part of the Ragulator complex, may activate the TOR signaling cascade in response to amino acids. The sequence is that of Ragulator complex protein LAMTOR5 homolog from Dictyostelium discoideum (Social amoeba).